Consider the following 366-residue polypeptide: Aminomethyltransferase (366 aa).

It belongs to the GcvT family. In terms of assembly, the glycine cleavage system is composed of four proteins: P, T, L and H.

The enzyme catalyses N(6)-[(R)-S(8)-aminomethyldihydrolipoyl]-L-lysyl-[protein] + (6S)-5,6,7,8-tetrahydrofolate = N(6)-[(R)-dihydrolipoyl]-L-lysyl-[protein] + (6R)-5,10-methylene-5,6,7,8-tetrahydrofolate + NH4(+). Functionally, the glycine cleavage system catalyzes the degradation of glycine. In Bordetella bronchiseptica (strain ATCC BAA-588 / NCTC 13252 / RB50) (Alcaligenes bronchisepticus), this protein is Aminomethyltransferase.